A 388-amino-acid chain; its full sequence is Alanine racemase 2 (388 aa).

Lys39 serves as the catalytic Proton acceptor; specific for D-alanine. Lys39 carries the post-translational modification N6-(pyridoxal phosphate)lysine. Arg137 lines the substrate pocket. Tyr267 acts as the Proton acceptor; specific for L-alanine in catalysis. Met315 serves as a coordination point for substrate.

Belongs to the alanine racemase family. It depends on pyridoxal 5'-phosphate as a cofactor.

The catalysed reaction is L-alanine = D-alanine. Its pathway is amino-acid biosynthesis; D-alanine biosynthesis; D-alanine from L-alanine: step 1/1. Catalyzes the interconversion of L-alanine and D-alanine. May also act on other amino acids. This chain is Alanine racemase 2 (alr2), found in Caldanaerobacter subterraneus subsp. tengcongensis (strain DSM 15242 / JCM 11007 / NBRC 100824 / MB4) (Thermoanaerobacter tengcongensis).